We begin with the raw amino-acid sequence, 503 residues long: Carboxyl-terminal PDZ ligand of neuronal nitric oxide synthase protein (503 aa).

The region spanning 26-191 is the PID domain; the sequence is FQHGISFEAK…ESERNSDGSG (166 aa). The interval 170–212 is disordered; it reads HTQQNADGQEDGESERNSDGSGDPGRQLTGAERVSTATAEETD. Phosphoserine occurs at positions 183, 187, 190, and 262. A disordered region spans residues 266-285; that stretch reads LLPSSSSSKPPGLGTGTPLS. Positions 319–360 form a coiled coil; sequence AAEAAARLEAQARVHQLLLQNKDMLQHISLLVKQVQELELKL. Serine 368, serine 371, serine 398, and serine 414 each carry phosphoserine. Residues 491-503 form an interaction with NOS1 region; the sequence is QELGDSLDDEIAV. Residues 501-503 carry the PDZ-binding motif; the sequence is IAV.

Interacts with the PDZ domain of NOS1 or the second PDZ domain of DLG4 through its C-terminus. Interacts with RASD1 and SYN1, SYN2 and SYN3 via its PID domain. Forms a ternary complex with NOS1 and RASD1. Forms a ternary complex with NOS1 and SYN1. In terms of tissue distribution, mainly expressed in brain. Highly expressed in accessory olfactory bulb, caudate-putamen, cerebellum, cerebral cortex, dentate gyrus of the hippocampus, islands of Calleja, olfactory bulb and supraoptic nucleus. Expressed in kidney glomeruli podocytes (at protein level).

The protein localises to the cell projection. It is found in the filopodium. The protein resides in the podosome. In terms of biological role, adapter protein involved in neuronal nitric-oxide (NO) synthesis regulation via its association with nNOS/NOS1. The complex formed with NOS1 and synapsins is necessary for specific NO and synapsin functions at a presynaptic level. Mediates an indirect interaction between NOS1 and RASD1 leading to enhance the ability of NOS1 to activate RASD1. Competes with DLG4 for interaction with NOS1, possibly affecting NOS1 activity by regulating the interaction between NOS1 and DLG4. In kidney podocytes, plays a role in podosomes and filopodia formation through CDC42 activation. The polypeptide is Carboxyl-terminal PDZ ligand of neuronal nitric oxide synthase protein (Rattus norvegicus (Rat)).